Here is a 919-residue protein sequence, read N- to C-terminus: Probable disease resistance protein At4g27220 (919 aa).

Coiled coils occupy residues 1–30 (MFRSNARALNRALERLKNVQTKVNEALKRS) and 74–95 (VEILEKVKRLEEQGQDLIKKIS). The region spanning 121–399 (MLDKLKDCLK…AEGLLDGQHH (279 aa)) is the NB-ARC domain. Residue 141–148 (GMGGVGKT) participates in ATP binding. LRR repeat units lie at residues 447 to 468 (GEGFHSLVMAGRGLIEFPQDKF), 469 to 492 (VSSVQRVSLMANKLERLPNNVIEG), 494 to 516 (ETLVLLLQGNSHVKEVPNGFLQA), 519 to 540 (NLRILDLSGVRIRTLPDSFSNL), 542 to 564 (SLRSLVLRNCKKLRNLPSLESLV), 565 to 587 (KLQFLDLHESAIRELPRGLEALS), 588 to 610 (SLRYICVSNTYQLQSIPAGTILQ), and 611 to 635 (LSSLEVLDMAGSAYSWGIKGEEREG).

The protein belongs to the disease resistance NB-LRR family.

Functionally, probable disease resistance protein. The polypeptide is Probable disease resistance protein At4g27220 (Arabidopsis thaliana (Mouse-ear cress)).